The primary structure comprises 173 residues: uncharacterized protein (173 aa).

The N-terminal stretch at 1–25 (MPVVTAVGRRRGFAMPWVSTARSGA) is a signal peptide.

This is an uncharacterized protein from Mycobacterium bovis (strain ATCC BAA-935 / AF2122/97).